Consider the following 369-residue polypeptide: Maltose/maltodextrin import ATP-binding protein MalK (369 aa).

One can recognise an ABC transporter domain in the interval 4-234 (VQLRNVTKAW…PADRFVAGFI (231 aa)). 36-43 (GPSGCGKS) contacts ATP.

The protein belongs to the ABC transporter superfamily. Maltooligosaccharide importer (TC 3.A.1.1.1) family. The complex is composed of two ATP-binding proteins (MalK), two transmembrane proteins (MalG and MalK) and a solute-binding protein (MalE).

It localises to the cell inner membrane. The enzyme catalyses D-maltose(out) + ATP + H2O = D-maltose(in) + ADP + phosphate + H(+). Its function is as follows. Part of the ABC transporter complex MalEFGK involved in maltose/maltodextrin import. Responsible for energy coupling to the transport system. The chain is Maltose/maltodextrin import ATP-binding protein MalK from Salmonella choleraesuis (strain SC-B67).